The sequence spans 419 residues: Transcription termination factor Rho (419 aa).

The Rho RNA-BD domain maps to 48–123 (DIFGDGVLEI…LKVNKVNYDK (76 aa)). RNA-binding regions lie at residues 61–66 (GFGFLR), 78–80 (DIY), and 108–110 (ERY). ATP contacts are provided by residues 169–174 (GRGQRG), 181–186 (KAGKTM), and R212. The interval 284–288 (VLTGG) is RNA-binding 2.

The protein belongs to the Rho family. In terms of assembly, homohexamer. The homohexamer assembles into an open ring structure.

Facilitates transcription termination by a mechanism that involves Rho binding to the nascent RNA, activation of Rho's RNA-dependent ATPase activity, and release of the mRNA from the DNA template. The sequence is that of Transcription termination factor Rho from Buchnera aphidicola subsp. Baizongia pistaciae (strain Bp).